We begin with the raw amino-acid sequence, 257 residues long: Very long chain fatty acid elongase F (257 aa).

The next 7 membrane-spanning stretches (helical) occupy residues 10–30 (IPVV…LLFV), 55–75 (IFQI…LFVL), 98–118 (LICT…IFFV), 135–155 (FAMA…GVAF), 158–178 (CLLN…SSIS), 191–211 (ITIA…ITLA), and 221–241 (LTYG…QFYY).

It belongs to the ELO family. Highly expressed in females. Little or no expression detected in males.

The protein resides in the endoplasmic reticulum membrane. It carries out the reaction a very-long-chain acyl-CoA + malonyl-CoA + H(+) = a very-long-chain 3-oxoacyl-CoA + CO2 + CoA. It functions in the pathway lipid metabolism; fatty acid biosynthesis. In terms of biological role, condensing enzyme that elongates saturated and monounsaturated very long chain fatty acids, to yield products up to 30 carbons in length. May also elongate diunsaturated fatty acids. Important for courtship behavior where it probably has a role in female pheromone biosynthesis. This Drosophila melanogaster (Fruit fly) protein is Very long chain fatty acid elongase F.